The chain runs to 310 residues: Zinc finger protein 346 (310 aa).

Residue M1 is modified to N-acetylmethionine. The segment covering M1–A12 has biased composition (low complexity). Residues M1–G33 are disordered. A Matrin-type 1 zinc finger spans residues F70–Y104. Residues C75, C78, H91, and H97 each contribute to the Zn(2+) site. K114 participates in a covalent cross-link: Glycyl lysine isopeptide (Lys-Gly) (interchain with G-Cter in SUMO2). Residues D131–K165 form a Matrin-type 2 zinc finger. Positions 136, 139, 152, and 158 each coordinate Zn(2+). K170 participates in a covalent cross-link: Glycyl lysine isopeptide (Lys-Gly) (interchain with G-Cter in SUMO2). 2 Matrin-type zinc fingers span residues D198 to L232 and G252 to T286. The tract at residues K278–D310 is disordered. Polar residues-rich tracts occupy residues S283 to G292 and Q299 to D310.

Forms a heteromeric complex with XPO5 and ILF3. Found in a nuclear export complex with XPO5, RAN, ILF3, ZNF346 and double-stranded RNA. Interacts with XPO5. Interacts with ILF3 in an RNA-independent manner.

It localises to the nucleus. It is found in the nucleolus. The protein localises to the cytoplasm. Functionally, binds with low affinity to dsDNA and ssRNA, and with high affinity to dsRNA, with no detectable sequence specificity. This Pongo abelii (Sumatran orangutan) protein is Zinc finger protein 346 (ZNF346).